Here is a 477-residue protein sequence, read N- to C-terminus: Glutamate--tRNA ligase (477 aa).

The short motif at 8–18 is the 'HIGH' region element; sequence PSPTGTLHIGT. The 'KMSKS' region signature appears at 247–251; it reads KLSKR. Lys250 provides a ligand contact to ATP.

It belongs to the class-I aminoacyl-tRNA synthetase family. Glutamate--tRNA ligase type 1 subfamily. In terms of assembly, monomer.

It is found in the cytoplasm. It carries out the reaction tRNA(Glu) + L-glutamate + ATP = L-glutamyl-tRNA(Glu) + AMP + diphosphate. In terms of biological role, catalyzes the attachment of glutamate to tRNA(Glu) in a two-step reaction: glutamate is first activated by ATP to form Glu-AMP and then transferred to the acceptor end of tRNA(Glu). The protein is Glutamate--tRNA ligase of Parasynechococcus marenigrum (strain WH8102).